We begin with the raw amino-acid sequence, 346 residues long: Holliday junction branch migration complex subunit RuvB (346 aa).

Residues 1–183 form a large ATPase domain (RuvB-L) region; it reads MTEQRIIASS…FGIVQRLEFY (183 aa). ATP-binding positions include Ile22, Arg23, Gly64, Lys67, Thr68, Thr69, 130–132, Arg173, Tyr183, and Arg220; that span reads EDF. Residue Thr68 participates in Mg(2+) binding. The tract at residues 184–254 is small ATPAse domain (RuvB-S); sequence SPQELTRIVS…VAQAAMQMLK (71 aa). The tract at residues 257–346 is head domain (RuvB-H); the sequence is PEGFDELDRR…PGIGEPGDLF (90 aa). DNA-binding residues include Arg293, Arg312, and Arg317.

It belongs to the RuvB family. Homohexamer. Forms an RuvA(8)-RuvB(12)-Holliday junction (HJ) complex. HJ DNA is sandwiched between 2 RuvA tetramers; dsDNA enters through RuvA and exits via RuvB. An RuvB hexamer assembles on each DNA strand where it exits the tetramer. Each RuvB hexamer is contacted by two RuvA subunits (via domain III) on 2 adjacent RuvB subunits; this complex drives branch migration. In the full resolvosome a probable DNA-RuvA(4)-RuvB(12)-RuvC(2) complex forms which resolves the HJ.

It is found in the cytoplasm. The enzyme catalyses ATP + H2O = ADP + phosphate + H(+). Functionally, the RuvA-RuvB-RuvC complex processes Holliday junction (HJ) DNA during genetic recombination and DNA repair, while the RuvA-RuvB complex plays an important role in the rescue of blocked DNA replication forks via replication fork reversal (RFR). RuvA specifically binds to HJ cruciform DNA, conferring on it an open structure. The RuvB hexamer acts as an ATP-dependent pump, pulling dsDNA into and through the RuvAB complex. RuvB forms 2 homohexamers on either side of HJ DNA bound by 1 or 2 RuvA tetramers; 4 subunits per hexamer contact DNA at a time. Coordinated motions by a converter formed by DNA-disengaged RuvB subunits stimulates ATP hydrolysis and nucleotide exchange. Immobilization of the converter enables RuvB to convert the ATP-contained energy into a lever motion, pulling 2 nucleotides of DNA out of the RuvA tetramer per ATP hydrolyzed, thus driving DNA branch migration. The RuvB motors rotate together with the DNA substrate, which together with the progressing nucleotide cycle form the mechanistic basis for DNA recombination by continuous HJ branch migration. Branch migration allows RuvC to scan DNA until it finds its consensus sequence, where it cleaves and resolves cruciform DNA. This Xanthomonas euvesicatoria pv. vesicatoria (strain 85-10) (Xanthomonas campestris pv. vesicatoria) protein is Holliday junction branch migration complex subunit RuvB.